The primary structure comprises 370 residues: 3-isopropylmalate dehydrogenase (370 aa).

77–90 (GPKWDSVPYEVRPE) lines the NAD(+) pocket. Residues R97, R107, R135, and D226 each coordinate substrate. Residues D226, D250, and D254 each coordinate Mg(2+). 290-302 (GSAPDIAGQGLAN) contacts NAD(+).

The protein belongs to the isocitrate and isopropylmalate dehydrogenases family. LeuB type 1 subfamily. As to quaternary structure, homodimer. Mg(2+) is required as a cofactor. Requires Mn(2+) as cofactor.

Its subcellular location is the cytoplasm. The enzyme catalyses (2R,3S)-3-isopropylmalate + NAD(+) = 4-methyl-2-oxopentanoate + CO2 + NADH. It functions in the pathway amino-acid biosynthesis; L-leucine biosynthesis; L-leucine from 3-methyl-2-oxobutanoate: step 3/4. Its function is as follows. Catalyzes the oxidation of 3-carboxy-2-hydroxy-4-methylpentanoate (3-isopropylmalate) to 3-carboxy-4-methyl-2-oxopentanoate. The product decarboxylates to 4-methyl-2 oxopentanoate. This is 3-isopropylmalate dehydrogenase from Nitrobacter winogradskyi (strain ATCC 25391 / DSM 10237 / CIP 104748 / NCIMB 11846 / Nb-255).